The following is a 249-amino-acid chain: Spindlin-4 (249 aa).

Tudor-like domain stretches follow at residues 41 to 90 (VGCR…LELH), 119 to 168 (VGKA…YTLL), and 201 to 246 (VGKQ…YGLV). 3 histone H3K4me3 and H3R8me2a binding regions span residues 80-85 (GKDSVY), Glu-128, and 237-239 (DIH).

The protein belongs to the SPIN/STSY family. Interacts with C11orf84/SPINDOC. Associates with chromatin.

It localises to the cytoplasm. Its subcellular location is the nucleus. Functionally, binds to acetylated and methylated histones, including H3K4me3 and H4K20me3, probably acting as a histone reader that recognizes chromatin marks to mediate downstream cellular effects. Promotes canonical WNT signaling, and is involved in the down-regulation of cell proliferation. This is Spindlin-4 (Spin4) from Mus musculus (Mouse).